A 317-amino-acid polypeptide reads, in one-letter code: Melanocyte-stimulating hormone receptor (317 aa).

Topologically, residues methionine 1–glutamate 37 are extracellular. Asparagine 29 carries an N-linked (GlcNAc...) asparagine glycan. A helical transmembrane segment spans residues valine 38–isoleucine 63. At alanine 64–proline 72 the chain is on the cytoplasmic side. Residues methionine 73–leucine 93 form a helical membrane-spanning segment. Residues glutamate 94–asparagine 118 lie on the Extracellular side of the membrane. The helical transmembrane segment at valine 119 to valine 140 threads the bilayer. Residues aspartate 141–arginine 163 are Cytoplasmic-facing. Residues alanine 164 to tyrosine 183 form a helical membrane-spanning segment. Over aspartate 184–cysteine 191 the chain is Extracellular. A helical transmembrane segment spans residues leucine 192 to leucine 211. The Cytoplasmic segment spans residues alanine 212 to alanine 240. Residues alanine 241–leucine 266 traverse the membrane as a helical segment. Topologically, residues cysteine 267 to asparagine 279 are extracellular. Residues phenylalanine 280 to phenylalanine 300 form a helical membrane-spanning segment. The Cytoplasmic portion of the chain corresponds to arginine 301–tryptophan 317. Cysteine 315 carries S-palmitoyl cysteine lipidation.

The protein belongs to the G-protein coupled receptor 1 family. In terms of assembly, interacts with MGRN1, but does not undergo MGRN1-mediated ubiquitination; this interaction competes with GNAS-binding and thus inhibits agonist-induced cAMP production. Interacts with OPN3; the interaction results in a decrease in MC1R-mediated cAMP signaling and ultimately a decrease in melanin production in melanocytes.

It is found in the cell membrane. Receptor for MSH (alpha, beta and gamma) and ACTH. The activity of this receptor is mediated by G proteins which activate adenylate cyclase. Mediates melanogenesis, the production of eumelanin (black/brown) and phaeomelanin (red/yellow), via regulation of cAMP signaling in melanocytes. The protein is Melanocyte-stimulating hormone receptor (MC1R) of Macaca nigra (Celebes black macaque).